A 119-amino-acid chain; its full sequence is Nascent polypeptide-associated complex protein (119 aa).

The 69-residue stretch at 5 to 73 (RMNSREMRRL…MREVPKEPEE (69 aa)) folds into the NAC-A/B domain.

This sequence belongs to the NAC-alpha family. As to quaternary structure, homodimer. Interacts with the ribosome. Binds ribosomal RNA.

In terms of biological role, contacts the emerging nascent chain on the ribosome. In Thermoplasma acidophilum (strain ATCC 25905 / DSM 1728 / JCM 9062 / NBRC 15155 / AMRC-C165), this protein is Nascent polypeptide-associated complex protein.